The chain runs to 490 residues: C-type lectin domain family 14 member A (490 aa).

Positions 1–21 (MRPAFALCLLWQALWPGPGGG) are cleaved as a signal peptide. The Extracellular portion of the chain corresponds to 22–397 (EHPTADRAGC…TPQAFDSSSA (376 aa)). The C-type lectin domain occupies 33 to 173 (ASGACYSLHH…LRANGYLCKY (141 aa)). Cysteines 143 and 162 form a disulfide. N-linked (GlcNAc...) asparagine glycosylation occurs at Asn189. One can recognise an EGF-like domain in the interval 245–287 (PCPGRYLRAGKCAELPNCLDDLGGFACECATGFELGKDGRSCV). Residues 286–349 (CVTSGEGQPT…VTSIPEIPRW (64 aa)) form a disordered region. Over residues 301–315 (VPTRRPPATATSPVP) the composition is skewed to low complexity. N-linked (GlcNAc...) asparagine glycosylation occurs at Asn381. The chain crosses the membrane as a helical span at residues 398–418 (VVFIFVSTAVVVLVILTMTVL). Topologically, residues 419–490 (GLVKLCFHES…AESPLGSSDA (72 aa)) are cytoplasmic. Residues 428–461 (SPSSQPRKESMGPPGLESDPEPAALGSSSAHCTN) form a disordered region.

The protein resides in the membrane. The chain is C-type lectin domain family 14 member A (CLEC14A) from Homo sapiens (Human).